Reading from the N-terminus, the 1427-residue chain is DNA-directed RNA polymerase subunit beta' (1427 aa).

The Zn(2+) site is built by Cys70, Cys72, Cys85, and Cys88. 3 residues coordinate Mg(2+): Asp461, Asp463, and Asp465. Zn(2+) is bound by residues Cys809, Cys882, Cys889, and Cys892. The tract at residues 1394–1427 (EAAIGDDPLGKVQGEDFTTDDVMVEERPEGASEE) is disordered. Residues 1417 to 1427 (VEERPEGASEE) are compositionally biased toward basic and acidic residues.

Belongs to the RNA polymerase beta' chain family. In terms of assembly, the RNAP catalytic core consists of 2 alpha, 1 beta, 1 beta' and 1 omega subunit. When a sigma factor is associated with the core the holoenzyme is formed, which can initiate transcription. Requires Mg(2+) as cofactor. Zn(2+) serves as cofactor.

The enzyme catalyses RNA(n) + a ribonucleoside 5'-triphosphate = RNA(n+1) + diphosphate. In terms of biological role, DNA-dependent RNA polymerase catalyzes the transcription of DNA into RNA using the four ribonucleoside triphosphates as substrates. The chain is DNA-directed RNA polymerase subunit beta' from Sphingopyxis alaskensis (strain DSM 13593 / LMG 18877 / RB2256) (Sphingomonas alaskensis).